The primary structure comprises 1088 residues: Neural cell adhesion molecule 1-A (1088 aa).

Residues 1–19 form the signal peptide; the sequence is MLHIKDLIWTLYFIGTAVA. Ig-like C2-type domains lie at 20–108, 113–202, 209–294, 303–397, and 400–484; these read LEVN…GTVN, QKLT…KDIQ, PTIQ…AEAT, PKIT…FEVQ, and PKIR…HEFS. The Extracellular portion of the chain corresponds to 20 to 705; the sequence is LEVNIVPDQG…TASAGTGLGT (686 aa). 2 disulfide bridges follow: Cys41/Cys93 and Cys136/Cys186. N-linked (GlcNAc...) asparagine glycosylation occurs at Asn82. Residues 149-153 and 158-162 contribute to the heparin site; these read RHKGK and KKDVR. Residue Asn219 is glycosylated (N-linked (GlcNAc...) asparagine). Cysteines 232 and 282 form a disulfide. Residues Asn310, Asn341, Asn417, Asn443, and Asn472 are each glycosylated (N-linked (GlcNAc...) asparagine). Cysteines 323 and 379 form a disulfide. An intrachain disulfide couples Cys420 to Cys473. Fibronectin type-III domains are found at residues 493–592 and 594–690; these read TPSS…TQPV and EPSA…TAKP. A helical membrane pass occupies residues 706 to 723; that stretch reads GAIVGILIVIFVLLLVVV. Residues 724–1088 lie on the Cytoplasmic side of the membrane; sequence DVTCFFLNKC…TQTNANESKA (365 aa). Over residues 758-784 the composition is skewed to basic and acidic residues; it reads EGKAAFSKDESKEPIVEVRTEEERTPN. 3 disordered regions span residues 758–802, 829–1000, and 1024–1088; these read EGKA…LTEP, FATA…DGGT, and VASG…ESKA. 3 stretches are compositionally biased toward low complexity: residues 835 to 847, 854 to 875, and 913 to 936; these read SPTS…TSST, APDS…APTT, and PSAA…VPPN. A compositionally biased stretch (polar residues) spans 965–974; that stretch reads QPSTVKNPTE. A compositionally biased stretch (basic and acidic residues) spans 1046-1064; sequence AKTEKTQVEEKSKPEEIDV. Positions 1076–1088 are enriched in polar residues; that stretch reads NEATQTNANESKA.

In terms of processing, polysialylated by ST8SIA2 and ST8SIA4. Polysialylation modulates cell interactions by confering both attractive and repulsive properties that are highly regulated by ST8SIA2 and ST8SIA4. Polysialylation is formed on a-2,3-linked sialic acid of core glycans. In terms of tissue distribution, expressed in neuron and in presumptive neural tissue.

Its subcellular location is the cell membrane. Functionally, this protein is a cell adhesion molecule involved in neuron-neuron adhesion, neurite fasciculation, outgrowth of neurites, etc. The polypeptide is Neural cell adhesion molecule 1-A (Xenopus laevis (African clawed frog)).